The primary structure comprises 804 residues: Exocyst complex component 6 (804 aa).

The protein belongs to the SEC15 family. As to quaternary structure, the exocyst complex is composed of EXOC1, EXOC2, EXOC3, EXOC4, EXOC5, EXOC6, EXOC7 and EXOC8. Interacts with CNTRL. Interacts with RAB11A in a GTP-dependent manner.

The protein resides in the cytoplasm. It is found in the perinuclear region. The protein localises to the cell projection. Its subcellular location is the growth cone. It localises to the midbody. The protein resides in the midbody ring. Its function is as follows. Component of the exocyst complex involved in the docking of exocytic vesicles with fusion sites on the plasma membrane. Together with RAB11A, RAB3IP, RAB8A, PARD3, PRKCI, ANXA2, CDC42 and DNMBP promotes transcytosis of PODXL to the apical membrane initiation sites (AMIS), apical surface formation and lumenogenesis. In Homo sapiens (Human), this protein is Exocyst complex component 6 (EXOC6).